Reading from the N-terminus, the 406-residue chain is MAAAVRQDLAQLMNSSGSHKDLAGKYRQILEKAIQLSGTEQLEALKAFVEAMVNENVSLVISRQLLTDFCTHLPNLPDSTAKEVYHFTLEKIQPRVISFEEQVASIRQHLASIYEKEEDWRNAAQVLVGIPLETGQKQYNVDYKLETYLKIARLYLEDDDPVQAEAYINRASLLQNESTNEQLQIHYKVCYARVLDYRRKFIEAAQRYNELSYKTIVHESERLEALKHALHCTILASAGQQRSRMLATLFKDERCQQLAAYGILEKMYLDRIIRGNQLQEFAAMLMPHQKATTADGSSILDRAVIEHNLLSASKLYNNITFEELGALLEIPAAKAEKIASQMITEGRMNGFIDQIDGIVHFETREALPTWDKQIQSLCFQVNNLLEKISQTAPEWTAQAMEAQMAQ.

Ala-2 carries the N-acetylalanine modification. Lys-25 bears the N6-acetyllysine mark. The PCI domain occupies 197 to 366 (YRRKFIEAAQ…GIVHFETREA (170 aa)).

Belongs to the CSN4 family. In terms of assembly, component of the CSN complex, composed of COPS1/GPS1, COPS2, COPS3, COPS4, COPS5, COPS6, COPS7 (COPS7A or COPS7B), COPS8 and COPS9. In the complex, it probably interacts directly with COPS1, COPS2, COPS3, COPS5, COPS6, COPS7 (COPS7A or COPS7B) and COPS8. Interacts with TOR1A; the interaction is direct and associates TOR1A and SNAPIN with the CSN complex. Interacts with STON2; controls STON2 neddylation levels. Interacts with ERCC6.

It localises to the cytoplasm. The protein resides in the nucleus. Its subcellular location is the cytoplasmic vesicle. The protein localises to the secretory vesicle. It is found in the synaptic vesicle. Its function is as follows. Component of the COP9 signalosome complex (CSN), a complex involved in various cellular and developmental processes. The CSN complex is an essential regulator of the ubiquitin (Ubl) conjugation pathway by mediating the deneddylation of the cullin subunits of SCF-type E3 ligase complexes, leading to decrease the Ubl ligase activity of SCF-type complexes such as SCF, CSA or DDB2. Also involved in the deneddylation of non-cullin subunits such as STON2. The complex is also involved in phosphorylation of p53/TP53, c-jun/JUN, IkappaBalpha/NFKBIA, ITPK1, IRF8/ICSBP and SNAPIN, possibly via its association with CK2 and PKD kinases. CSN-dependent phosphorylation of TP53 and JUN promotes and protects degradation by the Ubl system, respectively. This is COP9 signalosome complex subunit 4 (Cops4) from Mus musculus (Mouse).